The sequence spans 92 residues: Small ribosomal subunit protein uS19 (92 aa).

The protein belongs to the universal ribosomal protein uS19 family.

Protein S19 forms a complex with S13 that binds strongly to the 16S ribosomal RNA. The polypeptide is Small ribosomal subunit protein uS19 (Xanthobacter autotrophicus (strain ATCC BAA-1158 / Py2)).